Consider the following 423-residue polypeptide: Tegument protein UL43 (423 aa).

The segment covering 1–12 (MEKTPAETTAVS) has biased composition (polar residues). The disordered stretch occupies residues 1–46 (MEKTPAETTAVSAGNVPRDSIPCITNVSADTRGRTRPSRPATVPQR).

The protein belongs to the herpesviridae US22 family.

It localises to the virion tegument. The chain is Tegument protein UL43 (UL43) from Homo sapiens (Human).